The sequence spans 154 residues: Transcriptional repressor NrdR (154 aa).

The segment at 3-34 is a zinc-finger region; it reads CPFCGAEDTAVADTRLNDEADVVRRRRKCNAC. Residues 49–139 form the ATP-cone domain; it reads PQVVKKNGLR…VYRNFEDVDA (91 aa).

Belongs to the NrdR family. Zn(2+) is required as a cofactor.

In terms of biological role, negatively regulates transcription of bacterial ribonucleotide reductase nrd genes and operons by binding to NrdR-boxes. The polypeptide is Transcriptional repressor NrdR (Dechloromonas aromatica (strain RCB)).